The chain runs to 184 residues: MSWRSESIWIEFRTGSRKTSNFFWAFILFLGSLGFLLVGTSSYLGRNVISLFPSQQIIFFPQGIVMSFYGIAGLFISCYLWCTILWNVGSGYDLFDRKEGIVRIFRWGFPGKSRRIFLRFLMKDIQSIRIEVKEGISARRVLYMEIRGQGAIPLIRTDENFTTREIEQKAAELAYFLRVPIEVF.

2 helical membrane-spanning segments follow: residues 22–42 (FFWA…GTSS) and 57–77 (IIFF…LFIS).

This sequence belongs to the Ycf4 family.

It localises to the plastid. The protein localises to the chloroplast thylakoid membrane. Functionally, seems to be required for the assembly of the photosystem I complex. The sequence is that of Photosystem I assembly protein Ycf4 from Aethionema grandiflorum (Persian stone-cress).